Here is a 207-residue protein sequence, read N- to C-terminus: MEAIITKEFFEDKTTIELARDILGMRLVHQTDEGILSGLIVETEAYLGATDMAAHSFQNLRTKRTEVMFSSPGRIYMYQMHRQVLLNFITMPKGIPEAILIRAIEPDEQAKQQMVQNRHGKTGYELTNGPGKLTQALGLSMQDYGKTLFDSNIWLEEAKLPHLIEATNRIGVPNKGIATHFPLRFTVKGSPYISAQRKSRILTDIWK.

The protein belongs to the DNA glycosylase MPG family.

In Listeria monocytogenes serotype 4b (strain CLIP80459), this protein is Putative 3-methyladenine DNA glycosylase.